The following is a 259-amino-acid chain: uncharacterized protein (259 aa).

Residues 1–19 constitute a signal peptide (or 26); that stretch reads MKLSVKIAGVLTVAAAAMT. Residue 214 to 221 participates in ATP binding; the sequence is GPYELGKT.

This is an uncharacterized protein from Bacillus subtilis (strain 168).